Reading from the N-terminus, the 350-residue chain is Uroporphyrinogen decarboxylase (350 aa).

Substrate is bound by residues 27 to 31 (RQAGR), Phe46, Asp76, Tyr152, Ser207, and His321.

Belongs to the uroporphyrinogen decarboxylase family. In terms of assembly, homodimer.

The protein localises to the cytoplasm. It catalyses the reaction uroporphyrinogen III + 4 H(+) = coproporphyrinogen III + 4 CO2. The protein operates within porphyrin-containing compound metabolism; protoporphyrin-IX biosynthesis; coproporphyrinogen-III from 5-aminolevulinate: step 4/4. Functionally, catalyzes the decarboxylation of four acetate groups of uroporphyrinogen-III to yield coproporphyrinogen-III. The chain is Uroporphyrinogen decarboxylase from Listeria innocua serovar 6a (strain ATCC BAA-680 / CLIP 11262).